The sequence spans 577 residues: Protein NRT1/ PTR FAMILY 6.2 (577 aa).

The next 12 helical transmembrane spans lie at 28 to 48 (WITA…TMGI), 74 to 94 (FMGT…SFLG), 96 to 116 (FKTI…LAVA), 134 to 154 (IPAT…IALG), 183 to 203 (FFFN…VTVL), 214 to 234 (WAYG…LCGT), 332 to 352 (LLPI…MITF), 369 to 389 (IPAG…LAVY), 409 to 429 (LQRI…AALV), 447 to 467 (ISVF…AFIY), 488 to 508 (GLFL…VSIV), and 535 to 555 (WLLV…ALWF).

The protein belongs to the major facilitator superfamily. Proton-dependent oligopeptide transporter (POT/PTR) (TC 2.A.17) family. Expressed in shoots, leaves, flowers and siliques. Expressed in leaf petiole.

It is found in the membrane. Low-affinity proton-dependent nitrate transporter. Not involved in dipeptides transport. The sequence is that of Protein NRT1/ PTR FAMILY 6.2 (NPF6.2) from Arabidopsis thaliana (Mouse-ear cress).